Consider the following 895-residue polypeptide: Androgen receptor (895 aa).

The segment at 1 to 533 is modulating; it reads MEVQLGLGRV…PIDYYFPPQK (533 aa). The interval 1–562 is interaction with ZNF318; the sequence is MEVQLGLGRV…GSCKVFFKRA (562 aa). Disordered stretches follow at residues 33–150 and 178–211; these read VIQN…LSLL and QQQQQEAVSEGSSSGRAREASGAPTSSKDNYLEG. Low complexity-rich tracts occupy residues 44–81 and 178–200; these read AASAAPPGASLQQQQQQQQETSPRQQQQQQQGEDGSPQ and QQQQQEAVSEGSSSGRAREASGA. A Phosphoserine; by CDK9 modification is found at serine 65. Phosphoserine is present on serine 79. Positions 201 to 211 are enriched in polar residues; the sequence is PTSSKDNYLEG. Tyrosine 208 carries the post-translational modification Phosphotyrosine; by CSK. Residue serine 241 is modified to Phosphoserine. Tyrosine 252 carries the phosphotyrosine; by CSK and TNK2 modification. 4 positions are modified to phosphotyrosine; by CSK: tyrosine 292, tyrosine 331, tyrosine 342, and tyrosine 347. Tyrosine 348 bears the Phosphotyrosine; by CSK and TNK2 mark. Residue lysine 371 forms a Glycyl lysine isopeptide (Lys-Gly) (interchain with G-Cter in SUMO) linkage. Phosphotyrosine; by CSK is present on tyrosine 378. A Glycyl lysine isopeptide (Lys-Gly) (interchain with G-Cter in SUMO) cross-link involves residue lysine 496. A phosphotyrosine; by CSK mark is found at tyrosine 510 and tyrosine 527. Residues 527–894 are interaction with LPXN; it reads YYFPPQKTCL…GKVKPIYFHT (368 aa). Residues 534 to 607 constitute a DNA-binding region (nuclear receptor); the sequence is TCLICGDEAS…AGMTLGARKL (74 aa). NR C4-type zinc fingers lie at residues 535–555 and 571–595; these read CLICGDEASGCHYGALTCGSC and CASRNDCTIDKFRRKNCPSCRLRKC. An interaction with HIPK3 region spans residues 547–637; the sequence is YGALTCGSCK…TEETAQKLTV (91 aa). The interval 567 to 894 is interaction with CCAR1; the sequence is QKYLCASRND…GKVKPIYFHT (328 aa). The segment at 600–894 is interaction with KAT7; it reads MTLGARKLKK…GKVKPIYFHT (295 aa). Serine 626 carries the post-translational modification Phosphoserine; by STK4/MST1. Positions 644-875 constitute an NR LBD domain; sequence ECQPIFLNVL…DFPEMMAEII (232 aa). Asparagine 681 and arginine 728 together coordinate 17beta-hydroxy-5alpha-androstan-3-one. Glycyl lysine isopeptide (Lys-Gly) (interchain with G-Cter in ubiquitin) cross-links involve residues lysine 821 and lysine 823. 17beta-hydroxy-5alpha-androstan-3-one is bound at residue threonine 853. A Phosphotyrosine; by CSK modification is found at tyrosine 891.

Belongs to the nuclear hormone receptor family. NR3 subfamily. Binds DNA as a homodimer. Part of a ternary complex containing AR, EFCAB6/DJBP and PARK7. Interacts with HIPK3 and NR0B2 in the presence of androgen. The ligand binding domain interacts with KAT7/HBO1 in the presence of dihydrotestosterone. Interacts with EFCAB6/DJBP, PQBP1, RANBP9, RBAK, SPDEF, SRA1, TGFB1I1 and RREB1. Interacts with ZMIZ1/ZIMP10 and ZMIZ2/ZMIP7 which both enhance its transactivation activity. Interacts with SLC30A9 and RAD54L2/ARIP4. Interacts with MACROD1 (via macro domain). Interacts via the ligand-binding domain with LXXLL and FXXLF motifs from NCOA1, NCOA2, NCOA3 and MAGEA11. Interacts (via nuclear receptor DNA binding domain and nuclear receptor ligand binding domain) with NCOA4. The AR N-terminal poly-Gln region binds Ran resulting in enhancement of AR-mediated transactivation. Ran-binding decreases as the poly-Gln length increases. Interacts with HIP1 (via coiled coil domain). Interacts (via ligand-binding domain) with TRIM68. Interacts with TNK2. Interacts with USP26. Interacts with RNF6. Interacts (regulated by RNF6 probably through polyubiquitination) with RNF14; regulates AR transcriptional activity. Interacts with PRMT2 and TRIM24. Interacts with RACK1. Interacts with RANBP10; this interaction enhances dihydrotestosterone-induced AR transcriptional activity. Interacts with PRPF6 in a hormone-independent way; this interaction enhances dihydrotestosterone-induced AR transcriptional activity. Interacts with STK4/MST1. Interacts with ZIPK/DAPK3. Interacts with LPXN. Interacts with MAK. Part of a complex containing AR, MAK and NCOA3. Interacts with CRY1. Interacts with CCAR1 and GATA2. Interacts with ZNF318. Interacts with BUD31. Interacts with ARID4A. Interacts with ARID4B. Interacts (via NR LBD domain) with ZBTB7A; the interaction is direct and androgen-dependent. Interacts with NCOR1. Interacts with NCOR2. Interacts with CRY2 in a ligand-dependent manner. Post-translationally, phosphorylated in prostate cancer cells in response to several growth factors including EGF. Phosphorylation is induced by c-Src kinase (CSK). Tyr-510 is one of the major phosphorylation sites and an increase in phosphorylation and Src kinase activity is associated with prostate cancer progression. Phosphorylation by TNK2 enhances the DNA-binding and transcriptional activity. Phosphorylation at Ser-65 by CDK9 regulates AR promoter selectivity and cell growth. Sumoylated on Lys-371 (major) and Lys-496. Ubiquitinated. Deubiquitinated by USP26. 'Lys-6' and 'Lys-27'-linked polyubiquitination by RNF6 modulates AR transcriptional activity and specificity. In terms of processing, palmitoylated by ZDHHC7 and ZDHHC21. Palmitoylation is required for plasma membrane targeting and for rapid intracellular signaling via ERK and AKT kinases and cAMP generation.

The protein resides in the nucleus. It localises to the cytoplasm. Its function is as follows. Steroid hormone receptors are ligand-activated transcription factors that regulate eukaryotic gene expression and affect cellular proliferation and differentiation in target tissues. Transcription factor activity is modulated by bound coactivator and corepressor proteins like ZBTB7A that recruits NCOR1 and NCOR2 to the androgen response elements/ARE on target genes, negatively regulating androgen receptor signaling and androgen-induced cell proliferation. Transcription activation is also down-regulated by NR0B2. Activated, but not phosphorylated, by HIPK3 and ZIPK/DAPK3. The polypeptide is Androgen receptor (AR) (Macaca mulatta (Rhesus macaque)).